Reading from the N-terminus, the 346-residue chain is Holliday junction branch migration complex subunit RuvB (346 aa).

A large ATPase domain (RuvB-L) region spans residues 1 to 182 (MTRVISGEPQ…FGIPIRLEFY (182 aa)). ATP contacts are provided by L21, R22, G63, K66, T67, T68, R172, Y182, and R219. T67 provides a ligand contact to Mg(2+). The small ATPAse domain (RuvB-S) stretch occupies residues 183 to 253 (TPAELRHVLQ…AAAMALARLE (71 aa)). Residues 256–346 (ESGLDSLDRR…QAQGALFDEG (91 aa)) are head domain (RuvB-H). 3 residues coordinate DNA: R292, R311, and R316.

This sequence belongs to the RuvB family. In terms of assembly, homohexamer. Forms an RuvA(8)-RuvB(12)-Holliday junction (HJ) complex. HJ DNA is sandwiched between 2 RuvA tetramers; dsDNA enters through RuvA and exits via RuvB. An RuvB hexamer assembles on each DNA strand where it exits the tetramer. Each RuvB hexamer is contacted by two RuvA subunits (via domain III) on 2 adjacent RuvB subunits; this complex drives branch migration. In the full resolvosome a probable DNA-RuvA(4)-RuvB(12)-RuvC(2) complex forms which resolves the HJ.

It is found in the cytoplasm. The enzyme catalyses ATP + H2O = ADP + phosphate + H(+). In terms of biological role, the RuvA-RuvB-RuvC complex processes Holliday junction (HJ) DNA during genetic recombination and DNA repair, while the RuvA-RuvB complex plays an important role in the rescue of blocked DNA replication forks via replication fork reversal (RFR). RuvA specifically binds to HJ cruciform DNA, conferring on it an open structure. The RuvB hexamer acts as an ATP-dependent pump, pulling dsDNA into and through the RuvAB complex. RuvB forms 2 homohexamers on either side of HJ DNA bound by 1 or 2 RuvA tetramers; 4 subunits per hexamer contact DNA at a time. Coordinated motions by a converter formed by DNA-disengaged RuvB subunits stimulates ATP hydrolysis and nucleotide exchange. Immobilization of the converter enables RuvB to convert the ATP-contained energy into a lever motion, pulling 2 nucleotides of DNA out of the RuvA tetramer per ATP hydrolyzed, thus driving DNA branch migration. The RuvB motors rotate together with the DNA substrate, which together with the progressing nucleotide cycle form the mechanistic basis for DNA recombination by continuous HJ branch migration. Branch migration allows RuvC to scan DNA until it finds its consensus sequence, where it cleaves and resolves cruciform DNA. The chain is Holliday junction branch migration complex subunit RuvB from Caulobacter vibrioides (strain ATCC 19089 / CIP 103742 / CB 15) (Caulobacter crescentus).